The chain runs to 340 residues: Fructose-bisphosphate aldolase (340 aa).

Ser-53 lines the D-glyceraldehyde 3-phosphate pocket. Catalysis depends on Asp-95, which acts as the Proton donor. His-96, Asp-131, Glu-161, and His-212 together coordinate Zn(2+). Gly-213 contacts dihydroxyacetone phosphate. His-249 contributes to the Zn(2+) binding site. Residues 250–252 and 271–274 each bind dihydroxyacetone phosphate; these read GGS and NLDT.

This sequence belongs to the class II fructose-bisphosphate aldolase family. Zn(2+) is required as a cofactor.

It catalyses the reaction beta-D-fructose 1,6-bisphosphate = D-glyceraldehyde 3-phosphate + dihydroxyacetone phosphate. The protein operates within carbohydrate degradation; glycolysis; D-glyceraldehyde 3-phosphate and glycerone phosphate from D-glucose: step 4/4. Catalyzes the aldol condensation of dihydroxyacetone phosphate (DHAP or glycerone-phosphate) with glyceraldehyde 3-phosphate (G3P) to form fructose 1,6-bisphosphate (FBP) in gluconeogenesis and the reverse reaction in glycolysis. The polypeptide is Fructose-bisphosphate aldolase (fba) (Streptomyces galbus).